Reading from the N-terminus, the 450-residue chain is 23S rRNA (uracil(1939)-C(5))-methyltransferase RlmD (450 aa).

The [4Fe-4S] cluster site is built by Cys81, Cys87, Cys90, and Cys173. Gln276, Phe305, Asn310, Glu326, Asp353, and Asp372 together coordinate S-adenosyl-L-methionine. Catalysis depends on Cys402, which acts as the Nucleophile.

This sequence belongs to the class I-like SAM-binding methyltransferase superfamily. RNA M5U methyltransferase family. RlmD subfamily.

The catalysed reaction is uridine(1939) in 23S rRNA + S-adenosyl-L-methionine = 5-methyluridine(1939) in 23S rRNA + S-adenosyl-L-homocysteine + H(+). Functionally, catalyzes the formation of 5-methyl-uridine at position 1939 (m5U1939) in 23S rRNA. The polypeptide is 23S rRNA (uracil(1939)-C(5))-methyltransferase RlmD (Idiomarina loihiensis (strain ATCC BAA-735 / DSM 15497 / L2-TR)).